A 140-amino-acid chain; its full sequence is Nucleoside diphosphate kinase (140 aa).

Positions 11, 59, 87, 93, 104, and 114 each coordinate ATP. His-117 (pros-phosphohistidine intermediate) is an active-site residue.

This sequence belongs to the NDK family. Homotetramer. Mg(2+) is required as a cofactor.

It is found in the cytoplasm. The enzyme catalyses a 2'-deoxyribonucleoside 5'-diphosphate + ATP = a 2'-deoxyribonucleoside 5'-triphosphate + ADP. The catalysed reaction is a ribonucleoside 5'-diphosphate + ATP = a ribonucleoside 5'-triphosphate + ADP. In terms of biological role, major role in the synthesis of nucleoside triphosphates other than ATP. The ATP gamma phosphate is transferred to the NDP beta phosphate via a ping-pong mechanism, using a phosphorylated active-site intermediate. The sequence is that of Nucleoside diphosphate kinase from Rickettsia felis (strain ATCC VR-1525 / URRWXCal2) (Rickettsia azadi).